We begin with the raw amino-acid sequence, 289 residues long: T-cell ecto-ADP-ribosyltransferase 2 (289 aa).

The first 20 residues, 1 to 20 (MTSKIFKFFLTWWLTQQVTG), serve as a signal peptide directing secretion. 2 disulfides stabilise this stretch: Cys-41/Cys-246 and Cys-141/Cys-193. The TR mART core domain maps to 61–241 (EELKLEWEKA…IFLDSPERKK (181 aa)). An N-linked (GlcNAc...) asparagine glycan is attached at Asn-79. Positions 98, 146, and 164 each coordinate NAD(+). The active site involves Arg-146. Ser-167 is a catalytic residue. Ser-202 contacts NAD(+). The active site involves Glu-209. Residue Asn-249 is glycosylated (N-linked (GlcNAc...) asparagine). Ser-260 is lipidated: GPI-anchor amidated serine. Residues 261–289 (ISGSRESCVSLFLVVLLGLLVQQLTLAEL) constitute a propeptide, removed in mature form.

Belongs to the Arg-specific ADP-ribosyltransferase family. Expressed in spleen, intestine and thymus.

Its subcellular location is the cell membrane. The catalysed reaction is L-arginyl-[protein] + NAD(+) = N(omega)-(ADP-D-ribosyl)-L-arginyl-[protein] + nicotinamide + H(+). It catalyses the reaction NAD(+) + H2O = ADP-D-ribose + nicotinamide + H(+). Functionally, has both NAD(+) glycohydrolase and ADP-ribosyltransferase activity. In Mus musculus (Mouse), this protein is T-cell ecto-ADP-ribosyltransferase 2 (Art2b).